Reading from the N-terminus, the 413-residue chain is MSLKGKLQRMKKHMALDEGEQKIEAGKQENHFDDIPFLEEWEAFGMKPFIFEDEYCLIREVEYPLSHRHGLYSFSELEEVITLWNQSGLSHTLSAKGYNKNNLFFFDTETTGLGGGAGNTIFLLGHARVYEDRVTVKQHLLPKPGNEVALYQSFLSEVDITSLVTYNGKAFDWPQVKTRHTLIRDRLPKLPEFGHFDLLHGARRLWKHKMDRVSLGTVEKEELGIRRLEDTPGYLAPMLYFHFIKAQEPDLLKGVLHHNEMDVLSLISLYIHMSKKILSESHAPKEHSEAYAMAKWFMAHKETDQAIKQLERLIEKSFEDQDSARLDLSLLYKKQNRLEEAVPLWEKLSRSQNQKCRYAAVIELAKYFEHKKKEFGKALQVAEQSLSDAACLSEKETEKLHVRIARLKRKYSS.

This is an uncharacterized protein from Bacillus subtilis (strain 168).